The following is a 511-amino-acid chain: Probable lipid II flippase MurJ (511 aa).

11 helical membrane passes run 25 to 45 (DILIASIFGASMFTDAFFISF), 85 to 105 (SSILGFMSFFLLLLTILGGFF), 133 to 153 (IMFPYILLISLSSLCSSILNS), 156 to 178 (YFSIPAFSPIFLNISIIFFSVFF), 245 to 265 (ISLIINTIFSSLLNSGSISWI), 271 to 291 (LIEFPVGILGVSLSTVLFTSL), 315 to 335 (LIVSLPGSVILFFLAKPVIIV), 356 to 376 (LYSCGLISFIFVKILSSAFYA), 400 to 420 (FLIFYFQHAGIALSLSITSWV), 442 to 462 (FIFIIYIILATLVMIVILFVV), and 481 to 501 (LFFGKYVSGITYLFMMNILGI).

The protein belongs to the MurJ/MviN family.

The protein localises to the cell inner membrane. The protein operates within cell wall biogenesis; peptidoglycan biosynthesis. Involved in peptidoglycan biosynthesis. Transports lipid-linked peptidoglycan precursors from the inner to the outer leaflet of the cytoplasmic membrane. This chain is Probable lipid II flippase MurJ, found in Buchnera aphidicola subsp. Acyrthosiphon pisum (strain APS) (Acyrthosiphon pisum symbiotic bacterium).